We begin with the raw amino-acid sequence, 79 residues long: Acyl carrier protein (79 aa).

The region spanning 2–77 (SDIEARVRKI…SAIDYANTHQ (76 aa)) is the Carrier domain. At S37 the chain carries O-(pantetheine 4'-phosphoryl)serine.

Belongs to the acyl carrier protein (ACP) family. 4'-phosphopantetheine is transferred from CoA to a specific serine of apo-ACP by AcpS. This modification is essential for activity because fatty acids are bound in thioester linkage to the sulfhydryl of the prosthetic group.

The protein resides in the cytoplasm. It participates in lipid metabolism; fatty acid biosynthesis. Functionally, carrier of the growing fatty acid chain in fatty acid biosynthesis. This is Acyl carrier protein from Verminephrobacter eiseniae (strain EF01-2).